Consider the following 397-residue polypeptide: Phosphoglycerate kinase (397 aa).

Substrate contacts are provided by residues 21-23 (DFN), R37, 60-63 (HLGR), R119, and R152. Residues K203, G294, E325, and 354-357 (GGDS) each bind ATP.

Belongs to the phosphoglycerate kinase family. As to quaternary structure, monomer.

Its subcellular location is the cytoplasm. The enzyme catalyses (2R)-3-phosphoglycerate + ATP = (2R)-3-phospho-glyceroyl phosphate + ADP. It participates in carbohydrate degradation; glycolysis; pyruvate from D-glyceraldehyde 3-phosphate: step 2/5. This is Phosphoglycerate kinase from Chlorobium chlorochromatii (strain CaD3).